A 609-amino-acid chain; its full sequence is DNA mismatch repair protein MutL (609 aa).

Belongs to the DNA mismatch repair MutL/HexB family.

In terms of biological role, this protein is involved in the repair of mismatches in DNA. It is required for dam-dependent methyl-directed DNA mismatch repair. May act as a 'molecular matchmaker', a protein that promotes the formation of a stable complex between two or more DNA-binding proteins in an ATP-dependent manner without itself being part of a final effector complex. The protein is DNA mismatch repair protein MutL of Rickettsia felis (strain ATCC VR-1525 / URRWXCal2) (Rickettsia azadi).